The chain runs to 134 residues: Small ribosomal subunit protein uS8c (134 aa).

Belongs to the universal ribosomal protein uS8 family. In terms of assembly, part of the 30S ribosomal subunit.

It is found in the plastid. The protein resides in the chloroplast. In terms of biological role, one of the primary rRNA binding proteins, it binds directly to 16S rRNA central domain where it helps coordinate assembly of the platform of the 30S subunit. The polypeptide is Small ribosomal subunit protein uS8c (rps8) (Aethionema cordifolium (Lebanon stonecress)).